A 120-amino-acid polypeptide reads, in one-letter code: NAD(P)H-quinone oxidoreductase subunit 3, chloroplastic (120 aa).

A run of 3 helical transmembrane segments spans residues 10-30, 64-84, and 89-109; these read FWLF…ISKI, MFAL…PWAM, and LGIS…IGLI.

This sequence belongs to the complex I subunit 3 family. NDH is composed of at least 16 different subunits, 5 of which are encoded in the nucleus.

The protein resides in the plastid. Its subcellular location is the chloroplast thylakoid membrane. The enzyme catalyses a plastoquinone + NADH + (n+1) H(+)(in) = a plastoquinol + NAD(+) + n H(+)(out). It carries out the reaction a plastoquinone + NADPH + (n+1) H(+)(in) = a plastoquinol + NADP(+) + n H(+)(out). Functionally, NDH shuttles electrons from NAD(P)H:plastoquinone, via FMN and iron-sulfur (Fe-S) centers, to quinones in the photosynthetic chain and possibly in a chloroplast respiratory chain. The immediate electron acceptor for the enzyme in this species is believed to be plastoquinone. Couples the redox reaction to proton translocation, and thus conserves the redox energy in a proton gradient. The chain is NAD(P)H-quinone oxidoreductase subunit 3, chloroplastic from Angiopteris evecta (Mule's foot fern).